Reading from the N-terminus, the 254-residue chain is 5-oxoprolinase subunit A (254 aa).

The protein belongs to the LamB/PxpA family. As to quaternary structure, forms a complex composed of PxpA, PxpB and PxpC.

It carries out the reaction 5-oxo-L-proline + ATP + 2 H2O = L-glutamate + ADP + phosphate + H(+). Catalyzes the cleavage of 5-oxoproline to form L-glutamate coupled to the hydrolysis of ATP to ADP and inorganic phosphate. This Gluconobacter oxydans (strain 621H) (Gluconobacter suboxydans) protein is 5-oxoprolinase subunit A.